Consider the following 185-residue polypeptide: Class I hydrophobin SC6 (185 aa).

An N-terminal signal peptide occupies residues Met-1 to Ala-17. The segment at His-70–Asn-104 is disordered. Positions Thr-75–Ser-93 are enriched in low complexity. Positions Lys-94–Asn-104 are enriched in polar residues. Cystine bridges form between Cys-103–Cys-164, Cys-110–Cys-158, Cys-111–Cys-144, and Cys-165–Cys-178.

The protein belongs to the fungal hydrophobin family. As to quaternary structure, self-assembles to form functional amyloid fibrils called rodlets. Self-assembly into fibrillar rodlets occurs spontaneously at hydrophobic:hydrophilic interfaces and the rodlets further associate laterally to form amphipathic monolayers.

It localises to the secreted. It is found in the cell wall. Aerial growth, conidiation, and dispersal of filamentous fungi in the environment rely upon a capability of their secreting small amphipathic proteins called hydrophobins (HPBs) with low sequence identity. Class I can self-assemble into an outermost layer of rodlet bundles on aerial cell surfaces, conferring cellular hydrophobicity that supports fungal growth, development and dispersal; whereas Class II form highly ordered films at water-air interfaces through intermolecular interactions but contribute nothing to the rodlet structure. SC6 is a dikaryon-specific class I hydrophobin that contributes to the formation of aerial hyphae and fruiting bodies. The polypeptide is Class I hydrophobin SC6 (Schizophyllum commune (Split gill fungus)).